Reading from the N-terminus, the 87-residue chain is Small ribosomal subunit protein uS15c (87 aa).

The protein belongs to the universal ribosomal protein uS15 family. As to quaternary structure, part of the 30S ribosomal subunit.

It localises to the plastid. The protein localises to the chloroplast. The protein is Small ribosomal subunit protein uS15c (rps15) of Atropa belladonna (Belladonna).